A 194-amino-acid polypeptide reads, in one-letter code: Ras-related protein Rab-22A (194 aa).

Position 12–20 (12–20 (GDTGVGKSS)) interacts with GTP. The Effector region motif lies at 34–42 (INPTIGASF). Residues 60-64 (DTAGQ), 118-121 (NKCD), and 148-150 (SAK) contribute to the GTP site. Positions 170–194 (DANPASGGKGFKLRRQPSEPKRSCC) are disordered. Residues 185 to 194 (QPSEPKRSCC) are compositionally biased toward basic and acidic residues. 2 S-geranylgeranyl cysteine lipidation sites follow: C193 and C194.

Belongs to the small GTPase superfamily. Rab family. Binds EEA1. Interacts (in its GTP-bound form) with RINL. Interacts directly with ZFYVE20. Interacts (in its GTP-bound form) with RABGEF1. Detected in brain and heart, and at lower levels in lung and spleen.

It is found in the endosome membrane. The protein resides in the cell membrane. Its subcellular location is the early endosome. It localises to the late endosome. The protein localises to the cell projection. It is found in the ruffle. The protein resides in the cytoplasmic vesicle. Its subcellular location is the phagosome. It localises to the phagosome membrane. Its function is as follows. Plays a role in endocytosis and intracellular protein transport. Mediates trafficking of TF from early endosomes to recycling endosomes. Required for NGF-mediated endocytosis of NTRK1, and subsequent neurite outgrowth. Binds GTP and GDP and has low GTPase activity. Alternates between a GTP-bound active form and a GDP-bound inactive form. This chain is Ras-related protein Rab-22A (Rab22a), found in Mus musculus (Mouse).